The following is a 265-amino-acid chain: 5'-nucleotidase SurE (265 aa).

A divalent metal cation-binding residues include Asp-9, Asp-10, Ser-40, and Asn-96.

It belongs to the SurE nucleotidase family. A divalent metal cation is required as a cofactor.

It is found in the cytoplasm. It catalyses the reaction a ribonucleoside 5'-phosphate + H2O = a ribonucleoside + phosphate. Its function is as follows. Nucleotidase that shows phosphatase activity on nucleoside 5'-monophosphates. The sequence is that of 5'-nucleotidase SurE from Methanothrix thermoacetophila (strain DSM 6194 / JCM 14653 / NBRC 101360 / PT) (Methanosaeta thermophila).